Here is a 136-residue protein sequence, read N- to C-terminus: UPF0310 protein SMU_442 (136 aa).

This sequence belongs to the UPF0310 family.

The polypeptide is UPF0310 protein SMU_442 (Streptococcus mutans serotype c (strain ATCC 700610 / UA159)).